A 96-amino-acid chain; its full sequence is Prokineticin Bm8-e (96 aa).

The N-terminal stretch at 1 to 19 (MKCFAQIVVLLLVIAFSHG) is a signal peptide. 5 disulfide bridges follow: cysteine 26/cysteine 38, cysteine 32/cysteine 50, cysteine 37/cysteine 78, cysteine 60/cysteine 86, and cysteine 80/cysteine 95.

The protein belongs to the AVIT (prokineticin) family. Expressed by the skin glands.

The protein resides in the secreted. In terms of biological role, potent agonist for both PKR1/PROKR1 and PKR2/PROKR2, and inducer of a potent and long-lasting hyperalgesia. Also potentiates capsaicin-induced TRPV1 current, when tested on DRG neurons. At subnanomolar concentrations, this protein both induces potent chemotaxis of macrophages and stimulates LPS-induced production of the pro-inflammatory cytokines IL-1 and IL-12. In vivo, potently stimulates the contraction of the guinea-pig gastrointestinal (GI) smooth muscle (nanomolar concentration). The polypeptide is Prokineticin Bm8-e (Bombina maxima (Giant fire-bellied toad)).